A 600-amino-acid polypeptide reads, in one-letter code: Proline--tRNA ligase (600 aa).

The protein belongs to the class-II aminoacyl-tRNA synthetase family. ProS type 1 subfamily. In terms of assembly, homodimer.

It localises to the cytoplasm. It catalyses the reaction tRNA(Pro) + L-proline + ATP = L-prolyl-tRNA(Pro) + AMP + diphosphate. Its function is as follows. Catalyzes the attachment of proline to tRNA(Pro) in a two-step reaction: proline is first activated by ATP to form Pro-AMP and then transferred to the acceptor end of tRNA(Pro). As ProRS can inadvertently accommodate and process non-cognate amino acids such as alanine and cysteine, to avoid such errors it has two additional distinct editing activities against alanine. One activity is designated as 'pretransfer' editing and involves the tRNA(Pro)-independent hydrolysis of activated Ala-AMP. The other activity is designated 'posttransfer' editing and involves deacylation of mischarged Ala-tRNA(Pro). The misacylated Cys-tRNA(Pro) is not edited by ProRS. This is Proline--tRNA ligase from Synechococcus elongatus (strain ATCC 33912 / PCC 7942 / FACHB-805) (Anacystis nidulans R2).